Reading from the N-terminus, the 742-residue chain is Ion-translocating oxidoreductase complex subunit C (742 aa).

4Fe-4S ferredoxin-type domains are found at residues 369 to 397 and 407 to 436; these read GEPQ…QQLY and KATT…VQYF. Residues cysteine 377, cysteine 380, cysteine 383, cysteine 387, cysteine 416, cysteine 419, cysteine 422, and cysteine 426 each contribute to the [4Fe-4S] cluster site. The segment at 602–719 is disordered; that stretch reads KLEQQQANAE…PEEQVDPRKA (118 aa).

Belongs to the 4Fe4S bacterial-type ferredoxin family. RnfC subfamily. The complex is composed of six subunits: RsxA, RsxB, RsxC, RsxD, RsxE and RsxG. [4Fe-4S] cluster serves as cofactor.

The protein resides in the cell inner membrane. Part of a membrane-bound complex that couples electron transfer with translocation of ions across the membrane. Required to maintain the reduced state of SoxR. The protein is Ion-translocating oxidoreductase complex subunit C of Escherichia coli O6:H1 (strain CFT073 / ATCC 700928 / UPEC).